The sequence spans 95 residues: ESAT-6-like protein EsxH (95 aa).

It belongs to the WXG100 family. ESAT-6 subfamily. In terms of assembly, forms a tight 1:1 complex with EsxG.

It is found in the secreted. In Mycolicibacterium smegmatis (strain ATCC 700084 / mc(2)155) (Mycobacterium smegmatis), this protein is ESAT-6-like protein EsxH.